The following is a 465-amino-acid chain: 23S rRNA (uracil(1939)-C(5))-methyltransferase RlmD (465 aa).

Positions 1–22 (MSEAVPTSARKSKNAPVAPGPA) are disordered. A TRAM domain is found at 16–80 (PVAPGPAPVL…PSYEQATVVD (65 aa)). Residues Cys-93, Cys-99, Cys-102, and Cys-181 each coordinate [4Fe-4S] cluster. The S-adenosyl-L-methionine site is built by Gln-289, Phe-318, Asn-323, Glu-339, Asn-367, and Asp-388. Catalysis depends on Cys-421, which acts as the Nucleophile.

It belongs to the class I-like SAM-binding methyltransferase superfamily. RNA M5U methyltransferase family. RlmD subfamily.

The catalysed reaction is uridine(1939) in 23S rRNA + S-adenosyl-L-methionine = 5-methyluridine(1939) in 23S rRNA + S-adenosyl-L-homocysteine + H(+). Functionally, catalyzes the formation of 5-methyl-uridine at position 1939 (m5U1939) in 23S rRNA. In Burkholderia ambifaria (strain ATCC BAA-244 / DSM 16087 / CCUG 44356 / LMG 19182 / AMMD) (Burkholderia cepacia (strain AMMD)), this protein is 23S rRNA (uracil(1939)-C(5))-methyltransferase RlmD.